A 542-amino-acid chain; its full sequence is Phenylacetone monooxygenase (542 aa).

Residues S27, E46, 54–57 (VWYW), D66, Y72, V119, and Q152 contribute to the FAD site. 64-66 (RCD) provides a ligand contact to NADP(+). NADP(+)-binding positions include 194-200 (TGSSGIQ), 217-218 (RT), and 336-337 (KR). M446 contributes to the FAD binding site. W501 provides a ligand contact to NADP(+).

This sequence belongs to the FAD-binding monooxygenase family. Monomer. The cofactor is FAD.

The enzyme catalyses phenylacetone + NADPH + O2 + H(+) = benzyl acetate + NADP(+) + H2O. Its function is as follows. Catalyzes a Baeyer-Villiger oxidation reaction, i.e. the insertion of an oxygen atom into a carbon-carbon bond adjacent to a carbonyl, which converts ketones to esters. Is most efficient with phenylacetone as substrate, leading to the formation of benzyl acetate. Can also oxidize other aromatic ketones (benzylacetone, alpha-methylphenylacetone and 4-hydroxyacetophenone), some aliphatic ketones (dodecan-2-one and bicyclohept-2-en-6-one) and sulfides (e.g. methyl 4-tolylsulfide). In Thermobifida fusca (strain YX), this protein is Phenylacetone monooxygenase (pamO).